The following is a 243-amino-acid chain: Ubiquinone/menaquinone biosynthesis C-methyltransferase UbiE (243 aa).

Residues Thr69, Asp90, and 116–117 (DA) each bind S-adenosyl-L-methionine.

This sequence belongs to the class I-like SAM-binding methyltransferase superfamily. MenG/UbiE family.

The catalysed reaction is a 2-demethylmenaquinol + S-adenosyl-L-methionine = a menaquinol + S-adenosyl-L-homocysteine + H(+). It catalyses the reaction a 2-methoxy-6-(all-trans-polyprenyl)benzene-1,4-diol + S-adenosyl-L-methionine = a 5-methoxy-2-methyl-3-(all-trans-polyprenyl)benzene-1,4-diol + S-adenosyl-L-homocysteine + H(+). It participates in quinol/quinone metabolism; menaquinone biosynthesis; menaquinol from 1,4-dihydroxy-2-naphthoate: step 2/2. It functions in the pathway cofactor biosynthesis; ubiquinone biosynthesis. In terms of biological role, methyltransferase required for the conversion of demethylmenaquinol (DMKH2) to menaquinol (MKH2) and the conversion of 2-polyprenyl-6-methoxy-1,4-benzoquinol (DDMQH2) to 2-polyprenyl-3-methyl-6-methoxy-1,4-benzoquinol (DMQH2). This chain is Ubiquinone/menaquinone biosynthesis C-methyltransferase UbiE, found in Burkholderia ambifaria (strain MC40-6).